Consider the following 384-residue polypeptide: Galactokinase (384 aa).

34–37 (EHTD) contacts substrate. 123 to 129 (SSGLSSS) contributes to the ATP binding site. Positions 129 and 161 each coordinate Mg(2+). The active-site Proton acceptor is aspartate 173. Residue tyrosine 222 participates in substrate binding.

This sequence belongs to the GHMP kinase family. GalK subfamily.

Its subcellular location is the cytoplasm. It catalyses the reaction alpha-D-galactose + ATP = alpha-D-galactose 1-phosphate + ADP + H(+). Its pathway is carbohydrate metabolism; galactose metabolism. Catalyzes the transfer of the gamma-phosphate of ATP to D-galactose to form alpha-D-galactose-1-phosphate (Gal-1-P). The sequence is that of Galactokinase from Haemophilus influenzae (strain ATCC 51907 / DSM 11121 / KW20 / Rd).